We begin with the raw amino-acid sequence, 525 residues long: GMP synthase [glutamine-hydrolyzing] (525 aa).

The 199-residue stretch at 9–207 (RILILDFGSQ…VLDICQCEAL (199 aa)) folds into the Glutamine amidotransferase type-1 domain. Cys-86 functions as the Nucleophile in the catalytic mechanism. Catalysis depends on residues His-181 and Glu-183. The GMPS ATP-PPase domain maps to 208–400 (WTPATIIEDA…LGLPYDMLFR (193 aa)). 235–241 (SGGVDSS) serves as a coordination point for ATP.

Homodimer.

It carries out the reaction XMP + L-glutamine + ATP + H2O = GMP + L-glutamate + AMP + diphosphate + 2 H(+). It participates in purine metabolism; GMP biosynthesis; GMP from XMP (L-Gln route): step 1/1. Functionally, catalyzes the synthesis of GMP from XMP. The polypeptide is GMP synthase [glutamine-hydrolyzing] (Serratia proteamaculans (strain 568)).